A 168-amino-acid polypeptide reads, in one-letter code: ATP synthase subunit b (168 aa).

A helical transmembrane segment spans residues 9 to 29 (AIPFGTIAYTLFIFLLLLVML).

The protein belongs to the ATPase B chain family. In terms of assembly, F-type ATPases have 2 components, F(1) - the catalytic core - and F(0) - the membrane proton channel. F(1) has five subunits: alpha(3), beta(3), gamma(1), delta(1), epsilon(1). F(0) has three main subunits: a(1), b(2) and c(10-14). The alpha and beta chains form an alternating ring which encloses part of the gamma chain. F(1) is attached to F(0) by a central stalk formed by the gamma and epsilon chains, while a peripheral stalk is formed by the delta and b chains.

It is found in the cell membrane. Its function is as follows. F(1)F(0) ATP synthase produces ATP from ADP in the presence of a proton or sodium gradient. F-type ATPases consist of two structural domains, F(1) containing the extramembraneous catalytic core and F(0) containing the membrane proton channel, linked together by a central stalk and a peripheral stalk. During catalysis, ATP synthesis in the catalytic domain of F(1) is coupled via a rotary mechanism of the central stalk subunits to proton translocation. Functionally, component of the F(0) channel, it forms part of the peripheral stalk, linking F(1) to F(0). This chain is ATP synthase subunit b, found in Bacillus cereus (strain ATCC 10987 / NRS 248).